The primary structure comprises 326 residues: uncharacterized protein (326 aa).

Solcar repeat units lie at residues 15–106, 114–215, and 234–322; these read EFLV…VRRV, ETHA…ATDF, and LKTW…SKAL. A run of 6 helical transmembrane segments spans residues 16 to 36, 83 to 103, 120 to 140, 191 to 211, 240 to 260, and 294 to 314; these read FLVK…SVVA, TATL…YEQV, FLSG…LELI, FSVT…AYDL, LLCG…FEVC, and FFVG…TSFF.

Belongs to the mitochondrial carrier (TC 2.A.29) family.

It is found in the mitochondrion inner membrane. This is an uncharacterized protein from Schizosaccharomyces pombe (strain 972 / ATCC 24843) (Fission yeast).